Here is a 375-residue protein sequence, read N- to C-terminus: uncharacterized protein (375 aa).

Positions 1-20 (MKNKLFIILIIFIILKIVIC) are cleaved as a signal peptide. At 21-335 (QNTTPSKLIP…EKQVERKITP (315 aa)) the chain is on the extracellular side. Residues 30–42 (PQQQQKQKQQQTQ) show a composition bias toward low complexity. Disordered stretches follow at residues 30–74 (PQQQ…QPQQ) and 113–253 (SQNV…PHNH). Residues 43–53 (PHHHHHHHQQH) are compositionally biased toward basic residues. Positions 54 to 74 (QQHQQQHQPNQQIKQQQQPQQ) are enriched in low complexity. Residues 120–151 (PPHHTQQRVPHHHGPNGAPHHHGPNGAPHHHG) show a composition bias toward basic residues. A compositionally biased stretch (polar residues) spans 168 to 180 (GHNTQGHVQTNHV). Over residues 181-220 (NNINKNNINNNNNNNNNNNNNNNNNNNNNINDNKNIRNNI) the composition is skewed to low complexity. A helical transmembrane segment spans residues 336–356 (IMVLYILLASTMVIQLFIMVF). Residues 357–375 (KQVKHIREINAKTTMESLL) are Cytoplasmic-facing.

Its subcellular location is the membrane. This is an uncharacterized protein from Dictyostelium discoideum (Social amoeba).